Consider the following 166-residue polypeptide: Large ribosomal subunit protein uL10 (166 aa).

This sequence belongs to the universal ribosomal protein uL10 family. Part of the ribosomal stalk of the 50S ribosomal subunit. The N-terminus interacts with L11 and the large rRNA to form the base of the stalk. The C-terminus forms an elongated spine to which L12 dimers bind in a sequential fashion forming a multimeric L10(L12)X complex.

Its function is as follows. Forms part of the ribosomal stalk, playing a central role in the interaction of the ribosome with GTP-bound translation factors. The protein is Large ribosomal subunit protein uL10 of Staphylococcus aureus (strain JH1).